We begin with the raw amino-acid sequence, 245 residues long: 1-(5-phosphoribosyl)-5-[(5-phosphoribosylamino)methylideneamino] imidazole-4-carboxamide isomerase (245 aa).

The Proton acceptor role is filled by aspartate 8. The active-site Proton donor is the aspartate 130.

It belongs to the HisA/HisF family.

It localises to the cytoplasm. The catalysed reaction is 1-(5-phospho-beta-D-ribosyl)-5-[(5-phospho-beta-D-ribosylamino)methylideneamino]imidazole-4-carboxamide = 5-[(5-phospho-1-deoxy-D-ribulos-1-ylimino)methylamino]-1-(5-phospho-beta-D-ribosyl)imidazole-4-carboxamide. Its pathway is amino-acid biosynthesis; L-histidine biosynthesis; L-histidine from 5-phospho-alpha-D-ribose 1-diphosphate: step 4/9. The sequence is that of 1-(5-phosphoribosyl)-5-[(5-phosphoribosylamino)methylideneamino] imidazole-4-carboxamide isomerase from Pseudomonas syringae pv. tomato (strain ATCC BAA-871 / DC3000).